The chain runs to 359 residues: Aromatic amino acid aminotransferase (359 aa).

Positions 1 to 42 (MSERKPPYLRSALDSIPPYRPGRKVVGPDGRSAKLSSNESPF) are disordered. Lysine 223 is subject to N6-(pyridoxal phosphate)lysine.

It belongs to the class-II pyridoxal-phosphate-dependent aminotransferase family. Homodimer. The cofactor is pyridoxal 5'-phosphate.

It catalyses the reaction an aromatic L-alpha-amino acid + 2-oxoglutarate = an aromatic oxo-acid + L-glutamate. Aminotransferase that catalyzes the conversion of aromatic amino acids and 2-oxoglutarate into corresponding aromatic oxo acids and L-glutamate. The polypeptide is Aromatic amino acid aminotransferase (Thermobifida fusca (strain YX)).